The primary structure comprises 730 residues: Propionyl-CoA carboxylase alpha chain, mitochondrial (730 aa).

Residues 1–52 (MAGLWVGGSVLVAAGRRGSRSPRPLMRSVALWTLKHVPQYSRQRLLVSRSLC) constitute a mitochondrion transit peptide. The region spanning 62–509 (TFDKILIANR…NTKFLSDVYP (448 aa)) is the Biotin carboxylation domain. K65 is subject to N6-acetyllysine; alternate. K65 is modified (N6-succinyllysine; alternate). N6-succinyllysine is present on K119. Residue K150 is modified to N6-acetyllysine; alternate. K150 is modified (N6-succinyllysine; alternate). Residue K154 is modified to N6-acetyllysine. Position 177 (K177) interacts with ATP. In terms of domain architecture, ATP-grasp spans 181–378 (KLLAKKAKVN…LVQEMIRVAK (198 aa)). K188 carries the post-translational modification N6-succinyllysine. N6-acetyllysine; alternate is present on K200. N6-succinyllysine; alternate is present on K200. ATP contacts are provided by residues 209–270 (AREI…PRHI), E261, and N296. Position 252 is a phosphoserine (S252). N6-succinyllysine is present on K262. Residues E336, E349, and N351 each coordinate Mg(2+). Residues E336, E349, and N351 each contribute to the Mn(2+) site. E349 is an active-site residue. At K407 the chain carries N6-succinyllysine. Residue F409 coordinates biotin. 3 positions are modified to N6-succinyllysine: K502, K513, and K650. The Biotinyl-binding domain maps to 655 to 730 (KAAEDTSSIL…GEGDLLVELE (76 aa)). K696 carries the post-translational modification N6-biotinyllysine.

As to quaternary structure, the holoenzyme is a dodecamer composed of 6 PCCA/alpha subunits and 6 PCCB/beta subunits. Interacts (via the biotin carboxylation domain) with SIRT4. Interacts with SIRT3 and SIRT5. Requires Mg(2+) as cofactor. It depends on Mn(2+) as a cofactor. Biotin is required as a cofactor. Post-translationally, acetylated. The biotin cofactor is covalently attached to the C-terminal biotinyl-binding domain and is required for the catalytic activity. Biotinylation is catalyzed by HLCS.

It is found in the mitochondrion matrix. The enzyme catalyses propanoyl-CoA + hydrogencarbonate + ATP = (S)-methylmalonyl-CoA + ADP + phosphate + H(+). It carries out the reaction butanoyl-CoA + hydrogencarbonate + ATP = (2S)-ethylmalonyl-CoA + ADP + phosphate + H(+). It participates in metabolic intermediate metabolism; propanoyl-CoA degradation; succinyl-CoA from propanoyl-CoA: step 1/3. Its function is as follows. This is one of the 2 subunits of the biotin-dependent propionyl-CoA carboxylase (PCC), a mitochondrial enzyme involved in the catabolism of odd chain fatty acids, branched-chain amino acids isoleucine, threonine, methionine, and valine and other metabolites. Propionyl-CoA carboxylase catalyzes the carboxylation of propionyl-CoA/propanoyl-CoA to D-methylmalonyl-CoA/(S)-methylmalonyl-CoA. Within the holoenzyme, the alpha subunit catalyzes the ATP-dependent carboxylation of the biotin carried by the biotin carboxyl carrier (BCC) domain, while the beta subunit then tranfers the carboxyl group from carboxylated biotin to propionyl-CoA. Propionyl-CoA carboxylase also significantly acts on butyryl-CoA/butanoyl-CoA, which is converted to ethylmalonyl-CoA/(2S)-ethylmalonyl-CoA at a much lower rate. Other alternative minor substrates include (2E)-butenoyl-CoA/crotonoyl-CoA. The protein is Propionyl-CoA carboxylase alpha chain, mitochondrial of Sus scrofa (Pig).